A 355-amino-acid polypeptide reads, in one-letter code: Phosphate acyltransferase (355 aa).

The protein belongs to the PlsX family. Homodimer. Probably interacts with PlsY.

It is found in the cytoplasm. It carries out the reaction a fatty acyl-[ACP] + phosphate = an acyl phosphate + holo-[ACP]. Its pathway is lipid metabolism; phospholipid metabolism. Functionally, catalyzes the reversible formation of acyl-phosphate (acyl-PO(4)) from acyl-[acyl-carrier-protein] (acyl-ACP). This enzyme utilizes acyl-ACP as fatty acyl donor, but not acyl-CoA. In Erythrobacter litoralis (strain HTCC2594), this protein is Phosphate acyltransferase.